The following is a 108-amino-acid chain: Thioredoxin (108 aa).

Residues 2-108 (NKIIELTDQN…LKDFLDENIK (107 aa)) form the Thioredoxin domain. A disulfide bond links C32 and C35.

It belongs to the thioredoxin family.

Participates in various redox reactions through the reversible oxidation of its active center dithiol to a disulfide and catalyzes dithiol-disulfide exchange reactions. The protein is Thioredoxin (trxA) of Buchnera aphidicola subsp. Schizaphis graminum (strain Sg).